The following is a 509-amino-acid chain: Histidine--tRNA ligase, cytoplasmic (509 aa).

Alanine 2 carries the post-translational modification N-acetylalanine. In terms of domain architecture, WHEP-TRS spans 3–59; it reads DRAALEDLVRVQGERVRGLKQQKASAEQIEEEVAKLLKLKAQLGPDEGKPKFVLKTP. Serine 66 carries the post-translational modification Phosphoserine. Residues 130–132, arginine 157, glutamine 173, aspartate 177, arginine 326, and 330–331 each bind L-histidine; these read DLT and YY. Phosphoserine is present on serine 356.

This sequence belongs to the class-II aminoacyl-tRNA synthetase family. Homodimer.

The protein localises to the cytoplasm. It carries out the reaction tRNA(His) + L-histidine + ATP = L-histidyl-tRNA(His) + AMP + diphosphate + H(+). Its function is as follows. Catalyzes the ATP-dependent ligation of histidine to the 3'-end of its cognate tRNA, via the formation of an aminoacyl-adenylate intermediate (His-AMP). Plays a role in axon guidance. The protein is Histidine--tRNA ligase, cytoplasmic (HARS1) of Bos taurus (Bovine).